A 460-amino-acid polypeptide reads, in one-letter code: Ammonium transporter Rh type B-B (460 aa).

Residues 1 to 10 lie on the Cytoplasmic side of the membrane; it reads MTSYSTNMRI. A helical membrane pass occupies residues 11–31; that stretch reads KLPLFCLLLQFITIILFAVFV. Residues 32–62 are Extracellular-facing; sequence RYDHESDARGWHEELNNHSSSNADNDFYYRY. An N-linked (GlcNAc...) asparagine glycan is attached at N48. Residues 63–83 traverse the membrane as a helical segment; it reads PSFQDVHVMIFIGFGFLMTFL. The Cytoplasmic portion of the chain corresponds to 84–87; the sequence is KRYG. A helical membrane pass occupies residues 88-108; sequence FSSVAFNFLIAAFGLQWSTLI. Over 109-125 the chain is Extracellular; it reads QGFFHGFHDGKIHVGIE. Residues 126–146 traverse the membrane as a helical segment; that stretch reads SMINADFCTGAVLISFGAVLG. At 147-150 the chain is on the cytoplasmic side; sequence KTSP. Residues 151–171 form a helical membrane-spanning segment; it reads VQLIIMTLVEVTLFGINEYII. Topologically, residues 172 to 179 are extracellular; that stretch reads LNIVGAKD. A helical membrane pass occupies residues 180-202; it reads AGGSMTIHTFGAYFGLIVSRVLY. Over 203 to 220 the chain is Cytoplasmic; sequence REDLEKSRQREGSVYHSD. The chain crosses the membrane as a helical span at residues 221-241; that stretch reads LFAMIGTIYLWMFWPSFNSAV. Topologically, residues 242 to 252 are extracellular; that stretch reads TAHGDDQHRTV. The helical transmembrane segment at 253–273 threads the bilayer; it reads MNTYYSLAACTLATFGFSALL. Topologically, residues 274–283 are cytoplasmic; it reads NGEGKLDMVH. The helical transmembrane segment at 284-304 threads the bilayer; the sequence is IQNAALAGGVAVGTSGEMMLT. Position 305 (P305) is a topological domain, extracellular. Residues 306–326 traverse the membrane as a helical segment; the sequence is FGAMIAGTLAGMISVLGYKYL. Topologically, residues 327–347 are cytoplasmic; sequence TPVLDSKLKIQDTCGVHNLHG. A helical transmembrane segment spans residues 348 to 368; sequence MPGILGAIIGAIVALFATADI. Residues 369–394 lie on the Extracellular side of the membrane; sequence YGDGMGDVFPLISDGSRTAKQQSLYQ. Residues 395 to 415 form a helical membrane-spanning segment; that stretch reads FLALLVALGFAIIGGTVVGFI. Residues 416 to 460 are Cytoplasmic-facing; it reads LKLPIFGTPSDAECFEDAIYWEVPGGEGHQQLTVVINNEDPDTQA.

Belongs to the ammonium transporter (TC 2.A.49) family. Rh subfamily.

The protein localises to the basolateral cell membrane. It is found in the cytoplasmic vesicle membrane. Functionally, functions as a specific ammonium transporter. The sequence is that of Ammonium transporter Rh type B-B (rhbg-b) from Xenopus laevis (African clawed frog).